The sequence spans 238 residues: Sugar fermentation stimulation protein homolog (238 aa).

This sequence belongs to the SfsA family.

In Alkalilimnicola ehrlichii (strain ATCC BAA-1101 / DSM 17681 / MLHE-1), this protein is Sugar fermentation stimulation protein homolog.